Here is a 299-residue protein sequence, read N- to C-terminus: MALLIITTILWAFSFSFYGEYLAGHVDSYFAVLVRVGLAALVFLPFLRTRGNSLKTVGLYMLVGAMQLGVMYMLSFRAYLYLTVSELLLFTVLTPLYITLIYDIMSKRRLRWGYAFSALLAVIGAGIIRYDQVTDHFWTGLLLVQLSNITFAIGMVGYKRLMETRPMPQHNAFAWFYLGAFLVAVIAWFLLGNAQKMPQTTLQWGILVFLGVVASGIGYFMWNYGATQVDAGTLGIMNNMHVPAGLLVNLAIWHQQPHWPTFITGALVILASLWVHRKWVAPRSSQTADDRRRDCALSE.

10 helical membrane passes run 2-22 (ALLIITTILWAFSFSFYGEYL), 26-46 (VDSYFAVLVRVGLAALVFLPF), 56-76 (TVGLYMLVGAMQLGVMYMLSF), 81-101 (YLTVSELLLFTVLTPLYITLI), 110-130 (LRWGYAFSALLAVIGAGIIRY), 137-157 (FWTGLLLVQLSNITFAIGMVG), 172-192 (AFAWFYLGAFLVAVIAWFLLG), 202-222 (LQWGILVFLGVVASGIGYFMW), 233-253 (TLGIMNNMHVPAGLLVNLAIW), and 256-276 (QPHWPTFITGALVILASLWVH). 2 EamA domains span residues 3-128 (LLII…AGII) and 139-274 (TGLL…ASLW).

This sequence belongs to the drug/metabolite transporter (DMT) superfamily. 10 TMS drug/metabolite exporter (DME) (TC 2.A.7.3) family.

Its subcellular location is the cell inner membrane. It carries out the reaction biotin(in) = biotin(out). Functionally, uptake of biotin. This Escherichia coli O157:H7 protein is Biotin transporter.